We begin with the raw amino-acid sequence, 141 residues long: Small ribosomal subunit protein eS17z (141 aa).

The protein belongs to the eukaryotic ribosomal protein eS17 family.

This chain is Small ribosomal subunit protein eS17z (RPS17A), found in Arabidopsis thaliana (Mouse-ear cress).